The primary structure comprises 470 residues: O-acyltransferase pboC (470 aa).

Active-site proton acceptor residues include His149 and Asp386.

Belongs to the plant acyltransferase family. As to quaternary structure, monomer.

Its pathway is secondary metabolite biosynthesis. Its function is as follows. O-acetyltransferase; part of the gene cluster that mediates the biosynthesis of protubonine B, a hydroxylated and diacetylated cyclo-L-Trp-L-Leu derivative. Within the pathway, pboC catalyzes the acetylation of protubonine D at the hydroxy group to produce protubonine C. The first step of the protubonine B synthesis is performed by the nonribosomal peptide synthetase pboA that catalyzes the formation of cyclo-L-Trp-L-Leu by condensing L-Leu with L-Trp. The flavin-dependent monooxygenase pboD is responsible for hydroxylation at C-3 of the indole ring and subsequent formation of the pyrrolidine ring, leadind to protubonine D. Protubonine D is further diacetylated by two acetyltransferases, pboB and pboC, to form the final product protubonine B via protubonine C. This chain is O-acyltransferase pboC, found in Aspergillus ustus.